A 199-amino-acid chain; its full sequence is DnaJ homolog subfamily C member 5B (199 aa).

2 positions are modified to phosphoserine: Ser-14 and Ser-16. In terms of domain architecture, J spans 19–84 (ALYEILGLHK…SKRNIYDKYG (66 aa)).

As to quaternary structure, interacts with the chaperone complex consisting of HSC70 and SGTA. Palmitoylated.

The protein resides in the membrane. The protein is DnaJ homolog subfamily C member 5B (DNAJC5B) of Bos taurus (Bovine).